Reading from the N-terminus, the 169-residue chain is S-ribosylhomocysteine lyase (169 aa).

Fe cation contacts are provided by His54, His58, and Cys128.

This sequence belongs to the LuxS family. As to quaternary structure, homodimer. Requires Fe cation as cofactor.

It catalyses the reaction S-(5-deoxy-D-ribos-5-yl)-L-homocysteine = (S)-4,5-dihydroxypentane-2,3-dione + L-homocysteine. Functionally, involved in the synthesis of autoinducer 2 (AI-2) which is secreted by bacteria and is used to communicate both the cell density and the metabolic potential of the environment. The regulation of gene expression in response to changes in cell density is called quorum sensing. Catalyzes the transformation of S-ribosylhomocysteine (RHC) to homocysteine (HC) and 4,5-dihydroxy-2,3-pentadione (DPD). This is S-ribosylhomocysteine lyase from Shewanella baltica (strain OS223).